The following is a 205-amino-acid chain: MVEWLISDQLINYNYAVKFMEKKIQQIHNNSSDELVWLLQHPPLYTAGISATDDDVVEKLLPIYKTGRGGKYTYHGPGQRIIYLMLNLKKRNKCDIKLYIRELGSWIINVLKHFNIFGEFKEDRIGVWVNNNGVEEKIAAFGIRLRKWITYHGIALNFSPDLSHYKGIIPCGLKGYGVTSIKELGVKAPLFKLDNILKKEFYKIF.

The 176-residue stretch at 30–205 folds into the BPL/LPL catalytic domain; sequence NSSDELVWLL…ILKKEFYKIF (176 aa). Substrate-binding positions include 68–75, 140–142, and 153–155; these read RGGKYTYH, AFG, and GIA. Cys-171 acts as the Acyl-thioester intermediate in catalysis.

It belongs to the LipB family.

It localises to the cytoplasm. It carries out the reaction octanoyl-[ACP] + L-lysyl-[protein] = N(6)-octanoyl-L-lysyl-[protein] + holo-[ACP] + H(+). The protein operates within protein modification; protein lipoylation via endogenous pathway; protein N(6)-(lipoyl)lysine from octanoyl-[acyl-carrier-protein]: step 1/2. Catalyzes the transfer of endogenously produced octanoic acid from octanoyl-acyl-carrier-protein onto the lipoyl domains of lipoate-dependent enzymes. Lipoyl-ACP can also act as a substrate although octanoyl-ACP is likely to be the physiological substrate. The protein is Octanoyltransferase of Wolbachia sp. subsp. Brugia malayi (strain TRS).